The sequence spans 1217 residues: DNA-directed RNA polymerase subunit beta' (1217 aa).

Positions 60, 62, 75, and 78 each coordinate Zn(2+). Residues aspartate 449, aspartate 451, and aspartate 453 each contribute to the Mg(2+) site. Residues cysteine 821, cysteine 895, cysteine 902, and cysteine 905 each contribute to the Zn(2+) site.

Belongs to the RNA polymerase beta' chain family. In terms of assembly, the RNAP catalytic core consists of 2 alpha, 1 beta, 1 beta' and 1 omega subunit. When a sigma factor is associated with the core the holoenzyme is formed, which can initiate transcription. Mg(2+) serves as cofactor. Zn(2+) is required as a cofactor.

The catalysed reaction is RNA(n) + a ribonucleoside 5'-triphosphate = RNA(n+1) + diphosphate. Functionally, DNA-dependent RNA polymerase catalyzes the transcription of DNA into RNA using the four ribonucleoside triphosphates as substrates. This Lactobacillus helveticus (strain DPC 4571) protein is DNA-directed RNA polymerase subunit beta'.